An 88-amino-acid chain; its full sequence is Phosphocarrier protein HPr (88 aa).

One can recognise an HPr domain in the interval 1 to 88 (MASKEFHIVA…ETMTKEGLAE (88 aa)). The active-site Pros-phosphohistidine intermediate is the H15. Residue S46 is modified to Phosphoserine; by HPrK/P.

Belongs to the HPr family.

It localises to the cytoplasm. Its activity is regulated as follows. Phosphorylation on Ser-46 inhibits the phosphoryl transfer from enzyme I to HPr. Functionally, general (non sugar-specific) component of the phosphoenolpyruvate-dependent sugar phosphotransferase system (sugar PTS). This major carbohydrate active-transport system catalyzes the phosphorylation of incoming sugar substrates concomitantly with their translocation across the cell membrane. The phosphoryl group from phosphoenolpyruvate (PEP) is transferred to the phosphoryl carrier protein HPr by enzyme I. Phospho-HPr then transfers it to the PTS EIIA domain. P-Ser-HPr interacts with the catabolite control protein A (CcpA), forming a complex that binds to DNA at the catabolite response elements cre, operator sites preceding a large number of catabolite-regulated genes. Thus, P-Ser-HPr is a corepressor in carbon catabolite repression (CCR), a mechanism that allows bacteria to coordinate and optimize the utilization of available carbon sources. P-Ser-HPr also plays a role in inducer exclusion, in which it probably interacts with several non-PTS permeases and inhibits their transport activity. The protein is Phosphocarrier protein HPr (ptsH) of Lactococcus lactis subsp. cremoris (Streptococcus cremoris).